The following is an 816-amino-acid chain: H(+)/Cl(-) exchange transporter 5 (816 aa).

Positions 1–26 (MAMWQGAMDNRGFQQGSFSSFQNSSS) are disordered. Residues 1–124 (MAMWQGAMDN…WALIHSVSDA (124 aa)) lie on the Cytoplasmic side of the membrane. Residues 12–25 (GFQQGSFSSFQNSS) are compositionally biased toward low complexity. 2 helical membrane-spanning segments follow: residues 125–162 (FSGW…ICTG) and 208–231 (VNYF…VKVF). Positions 237 to 241 (GSGIP) match the Selectivity filter part_1 motif. S238 contributes to the chloride binding site. Positions 240-247 (IPEIKTIL) form an intramembrane region, helical. The next 2 membrane-spanning stretches (helical) occupy residues 256-275 (LGKW…VSSG) and 281-300 (EGPL…HCFN). The Selectivity filter part_2 motif lies at 279-283 (GKEGP). 2 consecutive intramembrane regions (helical) follow at residues 312–324 (VLSA…VSVA) and 328–336 (PIGGVLFSL). The next 5 membrane-spanning stretches (helical) occupy residues 348–366 (LWRS…RSIN), 389–415 (LVPF…AWCR), 422–442 (LGKY…ILAF), 498–518 (MWQL…TFGM), and 523–542 (GLFI…LGVG). The Selectivity filter part_3 signature appears at 523-527 (GLFIP). Residue F525 coordinates chloride. Positions 570 to 584 (GLYAMVGAAACLGGV) form an intramembrane region, helical. Residues 585–587 (TRM) constitute an intramembrane region (note=Loop between two helices). An intramembrane region (helical) is located at residues 588–599 (TVSLVVIMFELT). The segment at residues 600–604 (GGLEY) is an intramembrane region (note=Loop between two helices). A helical membrane pass occupies residues 605 to 622 (IVPLMAAAMTSKWVADAL). Over 623-816 (GREGIYDAHI…NQDPDSILFN (194 aa)) the chain is Cytoplasmic. A chloride-binding site is contributed by Y628. 2 CBS domains span residues 656 to 720 (MKPR…ARKK) and 752 to 812 (ILDL…DPDS). ATP contacts are provided by residues T666, 687–689 (YSG), and 794–797 (TKKD).

The protein belongs to the chloride channel (TC 2.A.49) family. ClC-5/CLCN5 subfamily. As to quaternary structure, interacts with NEDD4 and NEDD4L. Ubiquitinated by NEDD4L in the presence of albumin; which promotes endocytosis and proteasomal degradation. In terms of tissue distribution, kidney. Moderately expressed in aortic vascular smooth muscle and endothelial cells, and at a slightly higher level in the coronary vascular smooth muscle.

It localises to the golgi apparatus membrane. Its subcellular location is the endosome membrane. It is found in the cell membrane. It carries out the reaction 2 chloride(in) + H(+)(out) = 2 chloride(out) + H(+)(in). In terms of biological role, proton-coupled chloride transporter. Functions as antiport system and exchanges chloride ions against protons. Important for normal acidification of the endosome lumen. May play an important role in renal tubular function. The CLC channel family contains both chloride channels and proton-coupled anion transporters that exchange chloride or another anion for protons. The absence of conserved gating glutamate residues is typical for family members that function as channels. The protein is H(+)/Cl(-) exchange transporter 5 of Homo sapiens (Human).